Here is a 209-residue protein sequence, read N- to C-terminus: Thiamine-phosphate synthase 1 (209 aa).

4-amino-2-methyl-5-(diphosphooxymethyl)pyrimidine contacts are provided by residues glutamine 39 to lysine 43 and asparagine 74. Mg(2+)-binding residues include aspartate 75 and aspartate 94. Residue serine 112 participates in 4-amino-2-methyl-5-(diphosphooxymethyl)pyrimidine binding. A 2-[(2R,5Z)-2-carboxy-4-methylthiazol-5(2H)-ylidene]ethyl phosphate-binding site is contributed by threonine 138 to serine 140. Lysine 141 contacts 4-amino-2-methyl-5-(diphosphooxymethyl)pyrimidine. Residues glycine 170 and isoleucine 190–serine 191 each bind 2-[(2R,5Z)-2-carboxy-4-methylthiazol-5(2H)-ylidene]ethyl phosphate.

This sequence belongs to the thiamine-phosphate synthase family. Mg(2+) serves as cofactor.

It catalyses the reaction 2-[(2R,5Z)-2-carboxy-4-methylthiazol-5(2H)-ylidene]ethyl phosphate + 4-amino-2-methyl-5-(diphosphooxymethyl)pyrimidine + 2 H(+) = thiamine phosphate + CO2 + diphosphate. It carries out the reaction 2-(2-carboxy-4-methylthiazol-5-yl)ethyl phosphate + 4-amino-2-methyl-5-(diphosphooxymethyl)pyrimidine + 2 H(+) = thiamine phosphate + CO2 + diphosphate. The enzyme catalyses 4-methyl-5-(2-phosphooxyethyl)-thiazole + 4-amino-2-methyl-5-(diphosphooxymethyl)pyrimidine + H(+) = thiamine phosphate + diphosphate. The protein operates within cofactor biosynthesis; thiamine diphosphate biosynthesis; thiamine phosphate from 4-amino-2-methyl-5-diphosphomethylpyrimidine and 4-methyl-5-(2-phosphoethyl)-thiazole: step 1/1. Its function is as follows. Condenses 4-methyl-5-(beta-hydroxyethyl)thiazole monophosphate (THZ-P) and 2-methyl-4-amino-5-hydroxymethyl pyrimidine pyrophosphate (HMP-PP) to form thiamine monophosphate (TMP). In Streptococcus pneumoniae serotype 4 (strain ATCC BAA-334 / TIGR4), this protein is Thiamine-phosphate synthase 1.